Consider the following 674-residue polypeptide: MIMGNIQNRIDYLRKELIRHNGLYYESNNPEISDSEYDNLAKELEQIEKENPLFALPDSPTKKISGFVSSSFEQIKHSSPMLSLDNTYSQKETAKWYERIEKNLNNKNTEFTIEPKIDGVSASLTYINGSLTAGATRGDGETGEDITENIKKVKNIPYKLKADNPPYFFELRGEVYIDKSDFRKLNEEILMSVGQKFANSRNAASGSLRQKNPQITAERKLRFFVHSLGKIDGKQFESQSDFLQYCRKCGFQLQDNFKICHSLKEIMDFMEIMINNRDLLHYEIDGLVIKVNSLQLQKELGYTNKSPRWAIAFKFPAKQATTKLSRIRVQVGRTGIITPSAILESVTLAGVTISHATLHNFEEIERLNVNEGDTVLIERAGDVIPKIVKVVKKENRGFFKPPHNCPSCNSGIVKENEEEVAYRCINPECPAQFRRHLIHFVSRNAMDIDGFGKAVIDQFLDRKKIQVLADIYYLKYDDFIKLDLFKEKKTSNLMKAVAASKKHPLSKLLFALGIRRIGEKVSEIIAKKFKSMEALFNASIEDFTRVPEIGSILALSLKEFFENKTVRNVIDNLIAAGVNMIEPEAEQSGTQFDGKMFVLTGELKNHTREQAGKIIRSLGGKVASSVSKKTDYIVAGVNAGSKLKKAKELNVKIVDEAEFDILTGKLSLIENTKF.

NAD(+) is bound by residues Asp-34–Asp-38, Ser-83–Leu-84, and Glu-114. Catalysis depends on Lys-116, which acts as the N6-AMP-lysine intermediate. Arg-137, Glu-174, Lys-290, and Lys-314 together coordinate NAD(+). Cys-405, Cys-408, Cys-424, and Cys-429 together coordinate Zn(2+). The region spanning Gln-587 to Phe-674 is the BRCT domain.

This sequence belongs to the NAD-dependent DNA ligase family. LigA subfamily. It depends on Mg(2+) as a cofactor. Requires Mn(2+) as cofactor.

The enzyme catalyses NAD(+) + (deoxyribonucleotide)n-3'-hydroxyl + 5'-phospho-(deoxyribonucleotide)m = (deoxyribonucleotide)n+m + AMP + beta-nicotinamide D-nucleotide.. DNA ligase that catalyzes the formation of phosphodiester linkages between 5'-phosphoryl and 3'-hydroxyl groups in double-stranded DNA using NAD as a coenzyme and as the energy source for the reaction. It is essential for DNA replication and repair of damaged DNA. The protein is DNA ligase of Endomicrobium trichonymphae.